A 700-amino-acid chain; its full sequence is Polyribonucleotide nucleotidyltransferase (700 aa).

Positions 485 and 491 each coordinate Mg(2+). Residues 552-611 enclose the KH domain; the sequence is PRITTLKINPEKIRDVIGKGGATIRALTEETGTTIELEDDGTVKIASANGDATKEAIRRI. Residues 621–689 form the S1 motif domain; that stretch reads GTVYNGKVVR…RQGRVRLSMK (69 aa).

This sequence belongs to the polyribonucleotide nucleotidyltransferase family. As to quaternary structure, component of the RNA degradosome, which is a multiprotein complex involved in RNA processing and mRNA degradation. Mg(2+) serves as cofactor.

Its subcellular location is the cytoplasm. It catalyses the reaction RNA(n+1) + phosphate = RNA(n) + a ribonucleoside 5'-diphosphate. In terms of biological role, involved in mRNA degradation. Catalyzes the phosphorolysis of single-stranded polyribonucleotides processively in the 3'- to 5'-direction. This Shewanella loihica (strain ATCC BAA-1088 / PV-4) protein is Polyribonucleotide nucleotidyltransferase.